The following is a 1040-amino-acid chain: MQVLPPSSTGGPSRLFIMRPVATTLLMVAILLAGIIGYRALPVSALPEVDYPTIQVVTLYPGASPDVMTSAVTAPLERQFGQMSGLKQMSSQSSGGASVITLQFQLTLPLDVAEQEVQAAINAATNLLPSDLPNPPVYSKVNPADPPIMTLAVTSTAMPMTQVEDMVETRVAQKISQISGVGLVTLSGGQRPAVRVKLNAQAIAALGLTSETVRTAITGANVNSAKGSLDGPSRAVTLSANDQMQSAEEYRQLIIAYQNGAPIRLGDVATVEQGAENSWLGAWANKEQAIVMNVQRQPGANIISTADSIRQMLPQLTESLPKSVKVTVLSDRTTNIRASVDDTQFELMMAIALVVMIIYLFLRNIPATIIPGVAVPLSLIGTFAVMVFLDFSINNLTLMALTIATGFVVDDAIVVIENISRYIEKGEKPLAAALKGAGEIGFTIISLTFSLIAVLIPLLFMGDIVGRLFREFAITLAVAILISAVVSLTLTPMMCARMLSQESLRKQNRFSRASEKMFDRIIAAYGRGLAKVLNHPWLTLSVALSTLLLSVLLWVFIPKGFFPVQDNGIIQGTLQAPQSSSFANMAQRQRQVADVILQDPAVQSLTSFVGVDGTNPSLNSARLQINLKPLDERDDRVQKVIARLQTAVDKVPGVDLFLQPTQDLTIDTQVSRTQYQFTLQATSLDALSTWVPQLMEKLQQLPQLSDVSSDWQDKGLVAYVNVDRDSASRLGISMADVDNALYNAFGQRLISTIYTQANQYRVVLEHNTENTPGLAALDTIRLTSSDGGVVPLSSIAKIEQRFAPLSINHLDQFPVTTISFNVPDNYSLGDAVQAIMDTEKTLNLPVDITTQFQGSTLAFQSALGSTVWLIVAAVVAMYIVLGILYESFIHPITILSTLPTAGVGALLALMIAGSELDVIAIIGIILLIGIVKKNAIMMIDFALAAEREQGMSPREAIYQACLLRFRPILMTTLAALLGALPLMLSTGVGAELRRPLGIGMVGGLIVSQVLTLFTTPVIYLLFDRLALWTKSRFARHEEEA.

A run of 12 helical transmembrane segments spans residues 16–36 (FIMR…AGII), 347–367 (LMMA…NIPA), 369–389 (IIPG…MVFL), 396–416 (LTLM…IVVI), 440–460 (IGFT…PLLF), 472–492 (FAIT…TLTP), 537–557 (WLTL…WVFI), 863–883 (LGST…VLGI), 888–908 (FIHP…ALLA), 911–931 (IAGS…IGIV), 968–988 (ILMT…STGV), and 998–1018 (IGMV…TPVI).

It belongs to the resistance-nodulation-cell division (RND) (TC 2.A.6) family. MdtB subfamily. In terms of assembly, part of a tripartite efflux system composed of MdtA, MdtB and MdtC. MdtB forms a heteromultimer with MdtC.

It is found in the cell inner membrane. The MdtABC tripartite complex confers resistance against novobiocin and deoxycholate. This Escherichia coli O45:K1 (strain S88 / ExPEC) protein is Multidrug resistance protein MdtB.